Here is a 657-residue protein sequence, read N- to C-terminus: DNA mismatch repair protein MutL (657 aa).

It belongs to the DNA mismatch repair MutL/HexB family.

Functionally, this protein is involved in the repair of mismatches in DNA. It is required for dam-dependent methyl-directed DNA mismatch repair. May act as a 'molecular matchmaker', a protein that promotes the formation of a stable complex between two or more DNA-binding proteins in an ATP-dependent manner without itself being part of a final effector complex. This is DNA mismatch repair protein MutL from Streptococcus agalactiae serotype III (strain NEM316).